A 713-amino-acid polypeptide reads, in one-letter code: DNA polymerase eta (713 aa).

Residues 9–259 (VALVDMDCFF…MPIRKIRSLG (251 aa)) enclose the UmuC domain. Mg(2+) contacts are provided by aspartate 13 and methionine 14. Residues aspartate 13 and methionine 14 each coordinate Mn(2+). Arginine 61 serves as a coordination point for a 2'-deoxyribonucleoside 5'-triphosphate. Residues aspartate 115 and glutamate 116 each contribute to the Mg(2+) site. Positions 115 and 116 each coordinate Mn(2+). Disordered stretches follow at residues 441 to 472 (TSFL…AVTA) and 495 to 527 (EASL…QSTG). Composition is skewed to polar residues over residues 456-466 (VTSSEAKTQGS) and 497-527 (SLSS…QSTG). Residues 628–662 (AAEDQVPCEKCGSLVPVWDMPEHMDYHFALELQKS) form a UBZ3-type zinc finger. Zn(2+) contacts are provided by cysteine 635, cysteine 638, histidine 650, and histidine 654. The segment at 677-705 (VSHQGKRNPKSPLACTNKRPRPEGMQTLE) is disordered. Glycyl lysine isopeptide (Lys-Gly) (interchain with G-Cter in ubiquitin) cross-links involve residues lysine 682, lysine 686, and lysine 694. Positions 701–708 (MQTLESFF) match the PIP-box motif. A Glycyl lysine isopeptide (Lys-Gly) (interchain with G-Cter in ubiquitin) cross-link involves residue lysine 709.

It belongs to the DNA polymerase type-Y family. In terms of assembly, interacts with REV1. Interacts with monoubiquitinated PCNA, but not unmodified PCNA. Interacts with POLI; this interaction targets POLI to the replication machinery. Interacts with PALB2 and BRCA2; the interactions are direct and are required to sustain the recruitment of POLH at blocked replication forks and to stimulate POLH-dependent DNA synthesis on D loop substrates. Interacts (via C-terminus) with TRAIP. Interacts with ubiquitin. Interacts with POLDIP2. Mg(2+) is required as a cofactor. The cofactor is Mn(2+). Post-translationally, monoubiquitinated by RCHY1/PIRH2. Ubiquitination depends on integrity of the UBZ3-type zinc finger domain and is enhanced by TRAIP. Ubiquitination inhibits the ability of PolH to interact with PCNA and to bypass UV-induced lesions.

The protein localises to the nucleus. The catalysed reaction is DNA(n) + a 2'-deoxyribonucleoside 5'-triphosphate = DNA(n+1) + diphosphate. With respect to regulation, the enzyme in complex with the DNA substrate binds a third divalent metal cation. The binding of this third divalent cation, which is coordinated by water molecules and two oxygen atoms from DNA and dNTP, is essential for catalyzing the DNA synthesis. Its function is as follows. DNA polymerase specifically involved in the DNA repair by translesion synthesis (TLS). Due to low processivity on both damaged and normal DNA, cooperates with the heterotetrameric (REV3L, REV7, POLD2 and POLD3) POLZ complex for complete bypass of DNA lesions. Inserts one or 2 nucleotide(s) opposite the lesion, the primer is further extended by the tetrameric POLZ complex. In the case of 1,2-intrastrand d(GpG)-cisplatin cross-link, inserts dCTP opposite the 3' guanine. Particularly important for the repair of UV-induced pyrimidine dimers. Although inserts the correct base, may cause base transitions and transversions depending upon the context. May play a role in hypermutation at immunoglobulin genes. Forms a Schiff base with 5'-deoxyribose phosphate at abasic sites, but does not have any lyase activity, preventing the release of the 5'-deoxyribose phosphate (5'-dRP) residue. This covalent trapping of the enzyme by the 5'-dRP residue inhibits its DNA synthetic activity during base excision repair, thereby avoiding high incidence of mutagenesis. Targets POLI to replication foci. This Homo sapiens (Human) protein is DNA polymerase eta (POLH).